The primary structure comprises 509 residues: Coiled-coil domain-containing protein 181 (509 aa).

Residues 58 to 82 (VIEHTKQHSDPDKSLQDEVSPRKND) are compositionally biased toward basic and acidic residues. 3 disordered regions span residues 58–120 (VIEH…EEED), 241–332 (PINN…VTST), and 345–367 (QLEQ…EEKE). Composition is skewed to polar residues over residues 243–266 (NNAN…SVSG) and 300–332 (TCPS…VTST). The stretch at 335-375 (LSPRQKELQKQLEQKREKLKREEERRKIEEEKEKKRENDIV) forms a coiled coil.

The protein belongs to the CCDC181 family. In terms of assembly, homodimer. Interacts with HOOK1. Interacts with HOOK2. Interacts with HOOK3.

The protein resides in the cytoplasm. It is found in the cytoskeleton. It localises to the cell projection. Its subcellular location is the cilium. The protein localises to the flagellum. Its function is as follows. Microtubule-binding protein that localizes to the microtubular manchette of elongating spermatids. The protein is Coiled-coil domain-containing protein 181 of Pongo abelii (Sumatran orangutan).